We begin with the raw amino-acid sequence, 479 residues long: Nuclear receptor subfamily 6 group A member 1 (479 aa).

The segment at 1 to 32 is disordered; that stretch reads MERDERPPSGGGGGGGSAGFLEPPAALPPPPR. The segment covering 9–18 has biased composition (gly residues); that stretch reads SGGGGGGGSA. The nuclear receptor DNA-binding region spans 57–132; the sequence is QRTCLICGDR…MGMNRKAIRE (76 aa). Residues Cys-60, Cys-63, Cys-77, Cys-80, Cys-96, Cys-102, Cys-112, and Cys-115 each coordinate Zn(2+). NR C4-type zinc fingers lie at residues 60–80 and 96–120; these read CLIC…CEGC and CSRD…LLKC. Disordered regions lie at residues 131–150 and 162–198; these read REDG…QISE and FEEE…TLSS. Positions 165-177 are enriched in basic and acidic residues; the sequence is EANHWSNHGDSDH. A sufficient for interaction with UIMC1 region spans residues 172-252; that stretch reads HGDSDHSSPG…RSLDPQSYSL (81 aa). Residues 178 to 198 show a composition bias toward polar residues; it reads SSPGNRASESNQPSPGSTLSS. The NR LBD domain maps to 248-479; it reads QSYSLIHQLV…HSCKTSVGKE (232 aa).

It belongs to the nuclear hormone receptor family. NR6 subfamily. Homodimer. Interacts with UIMC1.

It is found in the nucleus. Functionally, orphan nuclear receptor that binds to a response element containing the sequence 5'-TCAAGGTCA-3'. Acts as a regulator of embryonic stem cell pluripotency by mediating repression of POU5F1/OCT4: binds to the DR0 element within the POU5F1/OCT4 promoter and inhibits POU5F1/OCT4 expression during embryonic stem cell differentiation. Involved in the regulation of gene expression in germ cell development during gametogenesis. This Sus scrofa (Pig) protein is Nuclear receptor subfamily 6 group A member 1 (NR6A1).